The primary structure comprises 1030 residues: Protein phosphatase 1 regulatory subunit 12A (1030 aa).

Residues 35-38 (KVKF) carry the KVKF motif motif. ANK repeat units lie at residues 39-68 (DDGA…DINY), 72-101 (DGLT…NINQ), 105-134 (EGWI…HVGA), 138-164 (EGDT…RQGV), 198-227 (SGGT…DVNI), and 231-260 (DGWT…DMEM). (3S)-3-hydroxyasparagine; by HIF1AN; partial occurs at positions 67 and 100. (3S)-3-hydroxyasparagine; by HIF1AN; partial is present on N226. 2 disordered regions span residues 290–628 (LHSE…SVPT) and 643–928 (ASTT…EKDD). The segment covering 291-300 (HSEKRDKKSP) has biased composition (basic and acidic residues). At S299 the chain carries Phosphoserine. Residues 302-316 (IESTANMDNNQSQKT) show a composition bias toward polar residues. Residues 318 to 340 (KNKETLIIEPEKNASRIESLEQE) show a composition bias toward basic and acidic residues. A compositionally biased stretch (acidic residues) spans 357–369 (SEEDEEDDSESEA). A compositionally biased stretch (low complexity) spans 385–402 (TSSTQAAPVAVTTPTVSS). S422 and S432 each carry phosphoserine. Residues 422-432 (SPKEEERKDES) are compositionally biased toward basic and acidic residues. T443 is subject to Phosphothreonine. A Phosphoserine; by NUAK1 modification is found at S445. Y446 bears the Phosphotyrosine mark. Positions 469–480 (RSASSPRLSSSL) are enriched in low complexity. A Phosphoserine; by NUAK1 modification is found at S472. Position 473 is a phosphoserine; by CDK1 (S473). S477 carries the post-translational modification Phosphoserine. Over residues 481 to 491 (DNKEKEKDSKG) the composition is skewed to basic and acidic residues. Residues S507 and S509 each carry the phosphoserine modification. Residues 540–551 (NSSVNEGSTYHK) show a composition bias toward polar residues. Low complexity predominate over residues 564-610 (SSSVPSTTSTPTVTSAAGLQKSLLSSTSTTTKITTGSSSAGTQSSTS). S601 and S618 each carry phosphoserine. The segment covering 614–625 (WAEDSTEKEKDS) has biased composition (basic and acidic residues). Over residues 643 to 660 (ASTTTLTTTTAGTVSSTT) the composition is skewed to low complexity. The segment covering 673 to 682 (VRDEESESQR) has biased composition (basic and acidic residues). The interval 682-864 (RKARSRQARQ…VSFWTQDSDE (183 aa)) is interaction with ROCK2. A compositionally biased stretch (basic residues) spans 683-693 (KARSRQARQSR). Phosphoserine; by PKA and PKG; in vitro occurs at positions 692 and 695. Position 696 is a phosphothreonine; by ROCK1, ROCK2, CDC42BP, ZIPK/DAPK3 and RAF1 (T696). The segment covering 718 to 767 (RTREQENEEKEKEEKEKQDKEKQEEKKESETSREDEYKQKYSRTYDETYQ) has biased composition (basic and acidic residues). A compositionally biased stretch (low complexity) spans 773–795 (STSSSTTPSSSLSTMSSSLYASS). Polar residues predominate over residues 796–810 (QLNRPNSLVGITSAY). The residue at position 802 (S802) is a Phosphoserine. Over residues 814–840 (ITKENEREGEKREEEKEGEDKSQPKSI) the composition is skewed to basic and acidic residues. Residues 841 to 852 (RERRRPREKRRS) are compositionally biased toward basic residues. S852 carries the phosphoserine; by ROCK2 modification. The span at 861 to 875 (DSDENEQEQQSDTEE) shows a compositional bias: acidic residues. A phosphoserine mark is found at S862 and S871. A compositionally biased stretch (polar residues) spans 884 to 897 (TDSISRYETSSTSA). S903 and S908 each carry phosphoserine. Positions 903–913 (SLLGRSGSYSY) are enriched in low complexity. At S910 the chain carries Phosphoserine; by NUAK1. The span at 914–928 (LEERKPYSSRLEKDD) shows a compositional bias: basic and acidic residues. S995 bears the Phosphoserine mark.

PP1 comprises a catalytic subunit, PPP1CA, PPP1CB or PPP1CC, and one or several targeting or regulatory subunits. PPP1R12A mediates binding to myosin. Interacts with ARHA and CIT. Binds PPP1R12B, ROCK1 and IL16. Interacts directly with PRKG1. Non-covalent dimer of 2 dimers; PRKG1-PRKG1 and PPP1R12A-PPP1R12A. Interacts with SMTNL1. Interacts with PPP1CB; the interaction is direct. Interacts (when phosphorylated at Ser-445, Ser-472 and Ser-910) with 14-3-3. Interacts with ROCK1 and ROCK2. Interacts with isoform 1 and isoform 2 of ZIPK/DAPK3. Interacts with RAF1. Interacts with HIF1AN. Interacts with NCKAP1L. Phosphorylated by CIT (Rho-associated kinase). Phosphorylated cooperatively by ROCK1 and CDC42BP on Thr-696. Phosphorylated on upon DNA damage, probably by ATM or ATR. In vitro, phosphorylation of Ser-695 by PKA and PKG appears to prevent phosphorylation of the inhibitory site Thr-696, probably mediated by PRKG1. Phosphorylation at Ser-445, Ser-472 and Ser-910 by NUAK1 promotes interaction with 14-3-3, leading to inhibit interaction with myosin light chain MLC2, preventing dephosphorylation of MLC2. May be phosphorylated at Thr-696 by DMPK; may inhibit the myosin phosphatase activity. Phosphorylated at Ser-473 by CDK1 during mitosis, creating docking sites for the POLO box domains of PLK1. Subsequently, PLK1 binds and phosphorylates PPP1R12A. Expressed in striated muscles, specifically in type 2a fibers (at protein level).

The protein localises to the cytoplasm. Its subcellular location is the cytoskeleton. It localises to the stress fiber. In terms of biological role, key regulator of protein phosphatase 1C (PPP1C). Mediates binding to myosin. As part of the PPP1C complex, involved in dephosphorylation of PLK1. Capable of inhibiting HIF1AN-dependent suppression of HIF1A activity. The polypeptide is Protein phosphatase 1 regulatory subunit 12A (Homo sapiens (Human)).